Reading from the N-terminus, the 279-residue chain is Diaminopimelate epimerase (279 aa).

The substrate site is built by N13 and N66. C75 functions as the Proton donor in the catalytic mechanism. Residues G76–N77, N164, N197, and E215–R216 each bind substrate. C224 serves as the catalytic Proton acceptor. G225 to T226 serves as a coordination point for substrate.

It belongs to the diaminopimelate epimerase family. Homodimer.

It is found in the cytoplasm. The enzyme catalyses (2S,6S)-2,6-diaminopimelate = meso-2,6-diaminopimelate. It participates in amino-acid biosynthesis; L-lysine biosynthesis via DAP pathway; DL-2,6-diaminopimelate from LL-2,6-diaminopimelate: step 1/1. In terms of biological role, catalyzes the stereoinversion of LL-2,6-diaminopimelate (L,L-DAP) to meso-diaminopimelate (meso-DAP), a precursor of L-lysine and an essential component of the bacterial peptidoglycan. The chain is Diaminopimelate epimerase from Brachyspira hyodysenteriae (strain ATCC 49526 / WA1).